Here is a 369-residue protein sequence, read N- to C-terminus: 4-hydroxy-3-methylbut-2-en-1-yl diphosphate synthase (flavodoxin) (369 aa).

Residues Cys270, Cys273, Cys305, and Glu312 each coordinate [4Fe-4S] cluster.

The protein belongs to the IspG family. The cofactor is [4Fe-4S] cluster.

The catalysed reaction is (2E)-4-hydroxy-3-methylbut-2-enyl diphosphate + oxidized [flavodoxin] + H2O + 2 H(+) = 2-C-methyl-D-erythritol 2,4-cyclic diphosphate + reduced [flavodoxin]. It participates in isoprenoid biosynthesis; isopentenyl diphosphate biosynthesis via DXP pathway; isopentenyl diphosphate from 1-deoxy-D-xylulose 5-phosphate: step 5/6. In terms of biological role, converts 2C-methyl-D-erythritol 2,4-cyclodiphosphate (ME-2,4cPP) into 1-hydroxy-2-methyl-2-(E)-butenyl 4-diphosphate. The chain is 4-hydroxy-3-methylbut-2-en-1-yl diphosphate synthase (flavodoxin) from Pseudomonas putida (strain GB-1).